The following is a 976-amino-acid chain: MWRNILGRASLRKVKFLSDSSSSGTHYPVNRVRGILSSVNLSGVRNGLSINPVNEMGGLSSFRHGQCYVFEGYATAAQAIDSTDPEDESSGSDEVNELITEMEKETERIRKKARLAAIPPKRVIAGMGAQKFYMLKQRQVKMETEEWERAARECREILADMCEQKLAPNLPYMKSLFLGWFEPVRNAIQDDLDTFKIKKGKIPYAPFMEQLPADKMAVITMHKMMGLLMTNAEGVGIVKLVNAATQIGEAVEQEVRINSFLQKKNKKNATDKTINTEAENVSEEIVAKETEKARKQVTVLMEKNKLRQVKALVRKHDSFKPWGQEAQVKVGARLIQLLMENAYIQPPAEQFDDGPPDIRPAFKQNFRTVTLENTKTSRRYGCIECDPLVLKGLDKSARHMVIPYLPMLIPPQNWTGYDQGAHFFLPSYVMRTHGAKQQRTVMKRTPKEQLEPVYEALDTLGNTKWKINKKVLSLVDRIWANGGRIGGLVDREDVPIPEEPEREDQEKFKNWRWESKKAIKQNNERHSQRCDIELKLEVARKMKDEEGFYYPHNVDFRGRAYPIHPYLNHLGSDLCRGILEFCEGKPLGKSGLRWLKIHIANLYAGGVDKLAYEDRIAFTESHLEDIFDSSDRPLEGKRWWLNAEDPFQCLAACINLSEALRSPFPEAAISHIPIHQDGSCNGLQHYAALGRDKLGADAVNLVTGEKPADVYTEIAARVLKIMQQDAEEDPETFPNATYAKLMLDQVDRKLVKQTVMTSVYGVTYSGARDQIKKRLKERGTFEDDSLTFHASCYAAKITLKALEEMFEAARAIKSWFGDCAKIIASENNAVCWTTPLGLPVVQPYRKPGRHLVKTTLQVLTLSRETDKVMARRQMTAFAPNFIHSLDGSHMMMTAVACNRAGLSFAGVHDSFWTHACDVDVMNTILREKFVELYEKPILENLLESFQKSFPDISFPPLPERGDFDLRKVLESTYFFN.

Residues 1-42 (MWRNILGRASLRKVKFLSDSSSSGTHYPVNRVRGILSSVNLS) constitute a mitochondrion transit peptide. Active-site residues include Asp-677, Lys-752, and Asp-909.

The protein belongs to the phage and mitochondrial RNA polymerase family.

It localises to the mitochondrion. It catalyses the reaction RNA(n) + a ribonucleoside 5'-triphosphate = RNA(n+1) + diphosphate. In terms of biological role, DNA-dependent RNA polymerase catalyzes the transcription of DNA into RNA using the four ribonucleoside triphosphates as substrates. This is DNA-directed RNA polymerase 1, mitochondrial (RPOT1) from Arabidopsis thaliana (Mouse-ear cress).